A 488-amino-acid polypeptide reads, in one-letter code: 3-octaprenyl-4-hydroxybenzoate carboxy-lyase (488 aa).

Asn172 provides a ligand contact to Mn(2+). Residues 175–177 (IYR), 189–191 (RWL), and 194–195 (RG) each bind prenylated FMN. Residue Glu238 participates in Mn(2+) binding. The active-site Proton donor is Asp287.

It belongs to the UbiD family. In terms of assembly, homohexamer. The cofactor is prenylated FMN. It depends on Mn(2+) as a cofactor.

It is found in the cell membrane. The catalysed reaction is a 4-hydroxy-3-(all-trans-polyprenyl)benzoate + H(+) = a 2-(all-trans-polyprenyl)phenol + CO2. Its pathway is cofactor biosynthesis; ubiquinone biosynthesis. In terms of biological role, catalyzes the decarboxylation of 3-octaprenyl-4-hydroxy benzoate to 2-octaprenylphenol, an intermediate step in ubiquinone biosynthesis. This Pseudomonas putida (strain GB-1) protein is 3-octaprenyl-4-hydroxybenzoate carboxy-lyase.